A 211-amino-acid polypeptide reads, in one-letter code: MPPKGNKHPIAQRQSQQKLQKQWDEEETWDDSQAEEVSDEEAEEQMESWDSLDEEDLEDVEEETIASDKAPSFKKPVRSQPPKTIPPLPPQPCSLKASRRWDTVSIAGSPTAPAAPTKRLEKTPRVRKTSSAIATRQDSPATQELRKRIFPTLYAIFQQSRGQQLELKVKNRSLRSLTRSCLYHRSEDQLQRTLEDAEALFNKYCSVSLKD.

Disordered stretches follow at residues 1–95 and 107–140; these read MPPK…PCSL and AGSP…QDSP. Positions 24-65 are enriched in acidic residues; sequence DEEETWDDSQAEEVSDEEAEEQMESWDSLDEEDLEDVEEETI. Over residues 83 to 92 the composition is skewed to pro residues; sequence KTIPPLPPQP. Over residues 129 to 140 the composition is skewed to polar residues; that stretch reads TSSAIATRQDSP. Residues 154-181 are necessary for nuclear subcellular location; the sequence is YAIFQQSRGQQLELKVKNRSLRSLTRSC. Positions 160 to 180 are RS-repeat; required for splicing enhancer activity; it reads SRGQQLELKVKNRSLRSLTRS.

Belongs to the adenoviridae splicing factor family. In terms of assembly, homooligomer. Interacts with DBP; this interaction occurs at a unique vertex during genome packaging. Interacts with IVa2; this interaction occurs at a unique vertex during genome packaging and seems to potentiate IVa2 and 33K oligomerization. Post-translationally, phosphorylated in vitro by human PKA and PRKDC. PRKDC inhibits, whereas PKA activates the splicing factor.

The protein localises to the host nucleus. Functionally, promotes alternative splicing of late transcripts by promoting splicing at weak 3' splice sites. Required for the temporal activation of major late pre-mRNA splicing at late times of infection. Induces the splicing and expression of the late capsid vertex protein. Probably functions as the small terminase that is part of the molecular motor that translocates genomic DNA in empty capsid during DNA packaging. This motor is located at a unique vertex and comprises at least the IVa2 ATPase, the small terminase 33K and probably a portal. Forms a ring-like structure of about 17 nm in which genomic DNA is translocated into the capsid. Stimulates IVa2 ATPase activity in the presence of the viral genome. Once the DNA is packaged, the terminase detaches: the 33K protein is present in the empty particles, but not in the mature virions. Also involved in virion assembly. The polypeptide is Protein 33K (Human adenovirus F serotype 40 (HAdV-40)).